A 698-amino-acid polypeptide reads, in one-letter code: Elongation factor G 1 (698 aa).

The 283-residue stretch at Glu-8–Val-290 folds into the tr-type G domain. Residues Ala-17 to Thr-24, Asp-88 to His-92, and Asn-142 to Asp-145 contribute to the GTP site.

This sequence belongs to the TRAFAC class translation factor GTPase superfamily. Classic translation factor GTPase family. EF-G/EF-2 subfamily.

The protein resides in the cytoplasm. Catalyzes the GTP-dependent ribosomal translocation step during translation elongation. During this step, the ribosome changes from the pre-translocational (PRE) to the post-translocational (POST) state as the newly formed A-site-bound peptidyl-tRNA and P-site-bound deacylated tRNA move to the P and E sites, respectively. Catalyzes the coordinated movement of the two tRNA molecules, the mRNA and conformational changes in the ribosome. This Aliivibrio fischeri (strain ATCC 700601 / ES114) (Vibrio fischeri) protein is Elongation factor G 1.